Here is a 61-residue protein sequence, read N- to C-terminus: Large ribosomal subunit protein eL37 (61 aa).

Residues cysteine 19, cysteine 22, cysteine 34, and cysteine 37 each coordinate Zn(2+). The C4-type zinc finger occupies 19 to 37; it reads CRRCGRNAYNVSKHYCAAC.

It belongs to the eukaryotic ribosomal protein eL37 family. Zn(2+) serves as cofactor.

In terms of biological role, binds to the 23S rRNA. This is Large ribosomal subunit protein eL37 from Saccharolobus islandicus (strain L.S.2.15 / Lassen #1) (Sulfolobus islandicus).